The following is a 446-amino-acid chain: tRNA-2-methylthio-N(6)-dimethylallyladenosine synthase (446 aa).

The region spanning 6–122 is the MTTase N-terminal domain; the sequence is RRYHITTFGC…LGDLLQQVFD (117 aa). The [4Fe-4S] cluster site is built by cysteine 15, cysteine 51, cysteine 85, cysteine 157, cysteine 161, and cysteine 164. The Radical SAM core domain maps to 143–380; sequence RDSNITAWVN…NHLVATKAAE (238 aa). The TRAM domain maps to 383-446; sequence QRYLGRIEEI…RPFSLTGVIF (64 aa).

This sequence belongs to the methylthiotransferase family. MiaB subfamily. As to quaternary structure, monomer. [4Fe-4S] cluster serves as cofactor.

Its subcellular location is the cytoplasm. The enzyme catalyses N(6)-dimethylallyladenosine(37) in tRNA + (sulfur carrier)-SH + AH2 + 2 S-adenosyl-L-methionine = 2-methylsulfanyl-N(6)-dimethylallyladenosine(37) in tRNA + (sulfur carrier)-H + 5'-deoxyadenosine + L-methionine + A + S-adenosyl-L-homocysteine + 2 H(+). In terms of biological role, catalyzes the methylthiolation of N6-(dimethylallyl)adenosine (i(6)A), leading to the formation of 2-methylthio-N6-(dimethylallyl)adenosine (ms(2)i(6)A) at position 37 in tRNAs that read codons beginning with uridine. The polypeptide is tRNA-2-methylthio-N(6)-dimethylallyladenosine synthase (Microcystis aeruginosa (strain NIES-843 / IAM M-2473)).